We begin with the raw amino-acid sequence, 122 residues long: Large ribosomal subunit protein uL14 (122 aa).

The protein belongs to the universal ribosomal protein uL14 family. As to quaternary structure, part of the 50S ribosomal subunit. Forms a cluster with proteins L3 and L19. In the 70S ribosome, L14 and L19 interact and together make contacts with the 16S rRNA in bridges B5 and B8.

Functionally, binds to 23S rRNA. Forms part of two intersubunit bridges in the 70S ribosome. The chain is Large ribosomal subunit protein uL14 from Rickettsia typhi (strain ATCC VR-144 / Wilmington).